A 142-amino-acid polypeptide reads, in one-letter code: Large ribosomal subunit protein uL16 (142 aa).

The protein belongs to the universal ribosomal protein uL16 family. Part of the 50S ribosomal subunit.

In terms of biological role, binds 23S rRNA and is also seen to make contacts with the A and possibly P site tRNAs. This Fervidobacterium nodosum (strain ATCC 35602 / DSM 5306 / Rt17-B1) protein is Large ribosomal subunit protein uL16.